We begin with the raw amino-acid sequence, 779 residues long: uncharacterized protein (779 aa).

Phosphoserine is present on residues Ser-97 and Ser-120. Positions 125–135 are enriched in basic and acidic residues; the sequence is EIDGEDEKKSV. Positions 125–174 are disordered; that stretch reads EIDGEDEKKSVGQESITGSAKRKDRRSKTNGSKRQKAEANREPPSDISLS. A compositionally biased stretch (basic residues) spans 144–158; that stretch reads AKRKDRRSKTNGSKR. A compositionally biased stretch (basic and acidic residues) spans 159 to 168; it reads QKAEANREPP. ATP-binding positions include 215 to 222 and 533 to 540; these read GPPGCGKT. Residues 759 to 779 form a disordered region; it reads DRQKYQRLAKRWSSASTNDAD.

Belongs to the AAA ATPase family.

Its subcellular location is the nucleus. This is an uncharacterized protein from Schizosaccharomyces pombe (strain 972 / ATCC 24843) (Fission yeast).